The primary structure comprises 218 residues: Glutathione S-transferase class-mu 26 kDa isozyme 7 (218 aa).

A GST N-terminal domain is found at 2 to 83; it reads PAKLGYWKIR…YIADKHGMLG (82 aa). Glutathione contacts are provided by residues 7–8, 41–45, 54–55, and 67–68; these read YW, WLGDK, NL, and QS. The region spanning 85–203 is the GST C-terminal domain; it reads TPEERARISM…KSERFIKWPL (119 aa). Y111 serves as a coordination point for substrate.

It belongs to the GST superfamily. Mu family. In terms of assembly, homodimer.

The catalysed reaction is RX + glutathione = an S-substituted glutathione + a halide anion + H(+). Conjugation of reduced glutathione to a wide number of exogenous and endogenous hydrophobic electrophiles. In terms of biological role, GST isoenzymes appear to play a central role in the parasite detoxification system. Other functions are also suspected including a role in increasing the solubility of haematin in the parasite gut. The polypeptide is Glutathione S-transferase class-mu 26 kDa isozyme 7 (Fasciola hepatica (Liver fluke)).